A 382-amino-acid chain; its full sequence is Histidine biosynthesis bifunctional protein HisB (382 aa).

The interval 1–190 (MQKIVFIDRD…EIYEFLRLPA (190 aa)) is histidinol-phosphatase. Aspartate 8 functions as the Nucleophile in the catalytic mechanism. 3 residues coordinate Mg(2+): aspartate 8, aspartate 10, and aspartate 129. Residue aspartate 10 is the Proton donor of the active site. The imidazoleglycerol-phosphate dehydratase stretch occupies residues 191-382 (RTALVERNTK…DNLPSTKGVL (192 aa)).

In the N-terminal section; belongs to the histidinol-phosphatase family. It in the C-terminal section; belongs to the imidazoleglycerol-phosphate dehydratase family. Mg(2+) is required as a cofactor.

It is found in the cytoplasm. It carries out the reaction D-erythro-1-(imidazol-4-yl)glycerol 3-phosphate = 3-(imidazol-4-yl)-2-oxopropyl phosphate + H2O. It catalyses the reaction L-histidinol phosphate + H2O = L-histidinol + phosphate. It functions in the pathway amino-acid biosynthesis; L-histidine biosynthesis; L-histidine from 5-phospho-alpha-D-ribose 1-diphosphate: step 6/9. The protein operates within amino-acid biosynthesis; L-histidine biosynthesis; L-histidine from 5-phospho-alpha-D-ribose 1-diphosphate: step 8/9. The sequence is that of Histidine biosynthesis bifunctional protein HisB from Spirosoma linguale (strain ATCC 33905 / DSM 74 / LMG 10896 / Claus 1).